The primary structure comprises 828 residues: Protein SEY1 homolog (828 aa).

Over 1 to 718 the chain is Cytoplasmic; it reads MTEDVMNDDF…SSKNGISWKN (718 aa). Positions 44–284 constitute a GB1/RHD3-type G domain; that stretch reads GFNYNVLSIL…VPSDGFFYYA (241 aa). Position 54–61 (54–61) interacts with GTP; the sequence is GCQSSGKS. The helical transmembrane segment at 719-739 threads the bilayer; it reads IPPPFWILLLLCSWNELCSVL. Topologically, residues 740-742 are lumenal; sequence RIV. Residues 743-763 form a helical membrane-spanning segment; sequence FKVQVLIPLIILGFIVVQYFS. Over 764 to 828 the chain is Cytoplasmic; the sequence is HLVFGTSADA…NDSGKKAEEN (65 aa).

It belongs to the TRAFAC class dynamin-like GTPase superfamily. GB1/RHD3 GTPase family. RHD3 subfamily.

It localises to the endoplasmic reticulum membrane. Probable GTP-binding protein that may be involved in cell development. This is Protein SEY1 homolog from Babesia bovis.